A 275-amino-acid chain; its full sequence is Interleukin-2 receptor subunit alpha (275 aa).

The N-terminal stretch at 1 to 21 is a signal peptide; sequence MEPSLLMWRFFVFIVVPGCVT. Residues 22–81 form the Sushi 1 domain; that stretch reads EACHDDPPSLRNAMFKVFRYEVGTMINCDCKTGFRRVSAVMRCVGDSSHSAWENRCFCNS. The Extracellular segment spans residues 22–243; the sequence is EACHDDPPSL…DTFIFTTEYQ (222 aa). Disulfide bonds link C24–C64, C49–C77, and C51–C79. N80 carries N-linked (GlcNAc...) asparagine glycosylation. Residues 88–130 are disordered; the sequence is QVKQVTPAPEEHREKKHTDAQNQTQPPEEADLPGHCEEPPPWE. The segment covering 96–106 has biased composition (basic and acidic residues); the sequence is PEEHREKKHTD. A glycan (N-linked (GlcNAc...) asparagine) is linked at N109. Residues 119–130 show a composition bias toward basic and acidic residues; that stretch reads LPGHCEEPPPWE. Positions 121–186 constitute a Sushi 2 domain; sequence GHCEEPPPWE…WTRPRLKCIR (66 aa). Cystine bridges form between C123/C168 and C152/C184. The tract at residues 188-221 is disordered; it reads GEHGQASDDAEPQESTEAPPGSGTFLPTRMAGTT. The chain crosses the membrane as a helical span at residues 244–262; it reads IAVAGCTLLLASILLLSCL. Residues 263–275 are Cytoplasmic-facing; the sequence is TWQRKWKKNRRTI.

As to quaternary structure, non-covalent dimer of an alpha and a beta subunit. IL2R exists in 3 different forms: a high affinity dimer, an intermediate affinity monomer (beta subunit), and a low affinity monomer (alpha subunit). The high and intermediate affinity forms also associate with a gamma subunit.

The protein localises to the membrane. Receptor for interleukin-2. The receptor is involved in the regulation of immune tolerance by controlling regulatory T cells (TREGs) activity. TREGs suppress the activation and expansion of autoreactive T-cells. The polypeptide is Interleukin-2 receptor subunit alpha (IL2RA) (Bos taurus (Bovine)).